We begin with the raw amino-acid sequence, 374 residues long: Queuine tRNA-ribosyltransferase (374 aa).

Aspartate 91 acts as the Proton acceptor in catalysis. Residues 91-95, aspartate 145, glutamine 189, and glycine 216 each bind substrate; that span reads DSGGY. An RNA binding region spans residues 247-253; sequence GVGTVPD. The active-site Nucleophile is the aspartate 266. The tract at residues 271–275 is RNA binding; important for wobble base 34 recognition; it reads TRNAR. Residues cysteine 304, cysteine 306, cysteine 309, and histidine 335 each coordinate Zn(2+).

The protein belongs to the queuine tRNA-ribosyltransferase family. Homodimer. Within each dimer, one monomer is responsible for RNA recognition and catalysis, while the other monomer binds to the replacement base PreQ1. Zn(2+) serves as cofactor.

It catalyses the reaction 7-aminomethyl-7-carbaguanine + guanosine(34) in tRNA = 7-aminomethyl-7-carbaguanosine(34) in tRNA + guanine. The protein operates within tRNA modification; tRNA-queuosine biosynthesis. Catalyzes the base-exchange of a guanine (G) residue with the queuine precursor 7-aminomethyl-7-deazaguanine (PreQ1) at position 34 (anticodon wobble position) in tRNAs with GU(N) anticodons (tRNA-Asp, -Asn, -His and -Tyr). Catalysis occurs through a double-displacement mechanism. The nucleophile active site attacks the C1' of nucleotide 34 to detach the guanine base from the RNA, forming a covalent enzyme-RNA intermediate. The proton acceptor active site deprotonates the incoming PreQ1, allowing a nucleophilic attack on the C1' of the ribose to form the product. After dissociation, two additional enzymatic reactions on the tRNA convert PreQ1 to queuine (Q), resulting in the hypermodified nucleoside queuosine (7-(((4,5-cis-dihydroxy-2-cyclopenten-1-yl)amino)methyl)-7-deazaguanosine). The sequence is that of Queuine tRNA-ribosyltransferase from Leptospira interrogans serogroup Icterohaemorrhagiae serovar Lai (strain 56601).